A 338-amino-acid polypeptide reads, in one-letter code: Bacteriochlorophyllide d C-20 methyltransferase (338 aa).

Glu147 provides a ligand contact to S-adenosyl-L-methionine. His150 serves as a coordination point for substrate. S-adenosyl-L-methionine is bound by residues Gly177, Asn200, 227-228 (DI), and 242-243 (CR). The Nucleophile role is filled by Tyr246. His290 provides a ligand contact to a bacteriochlorophyll d.

It belongs to the class I-like SAM-binding methyltransferase superfamily. Cation-independent O-methyltransferase family. In terms of assembly, homodimer.

It catalyses the reaction a bacteriochlorophyllide d + S-adenosyl-L-methionine = a bacteriochlorophyllide c + S-adenosyl-L-homocysteine + H(+). The protein operates within porphyrin-containing compound metabolism; bacteriochlorophyll biosynthesis (light-independent). In terms of biological role, involved in the biosynthesis of the major light-harvesting pigment bacteriochlorophyll c (BChlc), which confers a significant competitive advantage to green sulfur bacteria living at limiting red and near-infrared light intensities. Catalyzes the methylation at the C-20 position of the cyclic tetrapyrrole chlorin of bacteriochlorophyll d (BChld) to produce bacteriochlorophyll c (BChlc) using S-adenosylmethionine (SAM) as a methyl source. The chain is Bacteriochlorophyllide d C-20 methyltransferase from Chlorobaculum tepidum (strain ATCC 49652 / DSM 12025 / NBRC 103806 / TLS) (Chlorobium tepidum).